Here is a 2383-residue protein sequence, read N- to C-terminus: Highly reducing polyketide synthase SAT13 (2383 aa).

A Ketosynthase family 3 (KS3) domain is found at 6–433 (PVPLAIVGIA…GTNAHAVLER (428 aa)). Active-site for beta-ketoacyl synthase activity residues include C180, H315, and H355. Residues 536–828 (FIFTGQGAQW…IGPHSALAGP (293 aa)) are malonyl-CoA:ACP transacylase (MAT) domain. The active-site For malonyltransferase activity is S626. An N-terminal hotdog fold region spans residues 922–1062 (HDLLGLRMTE…GNIVVVFKTS (141 aa)). Residues 922-1239 (HDLLGLRMTE…GMELRSFVAR (318 aa)) are dehydratase (DH) domain. Residues 922-1242 (HDLLGLRMTE…LRSFVARDSN (321 aa)) form the PKS/mFAS DH domain. H954 (proton acceptor; for dehydratase activity) is an active-site residue. Residues 1087 to 1242 (GKLTHAGQLY…LRSFVARDSN (156 aa)) form a C-terminal hotdog fold region. D1152 serves as the catalytic Proton donor; for dehydratase activity. The segment at 1669 to 1977 (DGQNRLVFVE…KQGSMKKCVL (309 aa)) is enoylreductase (ER) domain. The segment at 2001-2184 (ATYVVAGGLG…MSLNIGGIKD (184 aa)) is catalytic ketoreductase (KRc) domain. Residues 2287-2364 (EISEFVARSI…DLAQKVVSRS (78 aa)) enclose the Carrier domain. S2324 is subject to O-(pantetheine 4'-phosphoryl)serine.

It participates in mycotoxin biosynthesis. Highly reducing polyketide synthase; part of the satratoxin SC2 cluster involved in the biosynthesis of satratoxins, trichothecene mycotoxins that are associated with human food poisonings. Satratoxins are suggested to be made by products of multiple gene clusters (SC1, SC2 and SC3) that encode 21 proteins in all, including polyketide synthases, acetyltransferases, and other enzymes expected to modify the trichothecene skeleton. SC1 encodes 10 proteins, SAT1 to SAT10. The largest are SAT8, which encodes a putative polyketide synthase (PKS) with a conventional non-reducing architecture, and SAT10, a putative protein containing four ankyrin repeats and thus may be involved in protein scaffolding. The putative short-chain reductase SAT3 may assist the PKS in some capacity. SAT6 contains a secretory lipase domain and acts probably as a trichothecene esterase. SAT5 encodes a putative acetyltransferase, and so, with SAT6, may affect endogenous protection from toxicity. The probable transcription factor SAT9 may regulate the expression of the SC1 cluster. SC2 encodes proteins SAT11 to SAT16, the largest of which encodes the putative reducing PKS SAT13. SAT11 is a cytochrome P450 monooxygenase, while SAT14 and SAT16 are probable acetyltransferases. The SC2 cluster may be regulated by the transcription factor SAT15. SC3 is a small cluster that encodes 5 proteins, SAT17 to SAT21. SAT21 is a putative MFS-type transporter which may have a role in exporting secondary metabolites. The four other proteins putatively encoded in SC3 include the taurine hydroxylase-like protein SAT17, the O-methyltransferase SAT18, the acetyltransferase SAT19, and the Cys6-type zinc finger SAT20, the latter being probably involved in regulation of SC3 expression. The polypeptide is Highly reducing polyketide synthase SAT13 (Stachybotrys chartarum (strain CBS 109288 / IBT 7711) (Toxic black mold)).